The primary structure comprises 324 residues: Methionyl-tRNA formyltransferase (324 aa).

(6S)-5,6,7,8-tetrahydrofolate is bound at residue 114 to 117; it reads SLLP.

The protein belongs to the Fmt family.

The catalysed reaction is L-methionyl-tRNA(fMet) + (6R)-10-formyltetrahydrofolate = N-formyl-L-methionyl-tRNA(fMet) + (6S)-5,6,7,8-tetrahydrofolate + H(+). Functionally, attaches a formyl group to the free amino group of methionyl-tRNA(fMet). The formyl group appears to play a dual role in the initiator identity of N-formylmethionyl-tRNA by promoting its recognition by IF2 and preventing the misappropriation of this tRNA by the elongation apparatus. In Azobacteroides pseudotrichonymphae genomovar. CFP2, this protein is Methionyl-tRNA formyltransferase.